A 173-amino-acid chain; its full sequence is Beta-defensin 129 (173 aa).

The first 19 residues, 1-19, serve as a signal peptide directing secretion; sequence MKLLFPIFASLMLQYKVNT. Cystine bridges form between cysteine 27/cysteine 53, cysteine 34/cysteine 48, and cysteine 38/cysteine 54. Positions 144 to 173 are disordered; sequence STKSNIKESRDSATASPPPAPPPPNTLPTP. Pro residues predominate over residues 159–173; that stretch reads SPPPAPPPPNTLPTP.

It belongs to the beta-defensin family.

The protein localises to the secreted. Functionally, has antibacterial activity. This chain is Beta-defensin 129 (DEFB129), found in Hylobates lar (Lar gibbon).